Consider the following 394-residue polypeptide: Putative fimbrial assembly protein FimD, serogroup D (394 aa).

The chain is Putative fimbrial assembly protein FimD, serogroup D (fimD) from Dichelobacter nodosus (Bacteroides nodosus).